Consider the following 138-residue polypeptide: MLIPRKVKHRKQHHPRQRGIASGGTAVNFGDYGIQALEHAYVTNRQIESARIAINRHIKRGGKVWINVFPDRPLTKKPAETRMGSGKGSPEWWVVNVKPGRVLFELSYPNEQTARAALTRAIHKLPIKARIVTREDQF.

A compositionally biased stretch (basic residues) spans 1 to 17 (MLIPRKVKHRKQHHPRQ). The disordered stretch occupies residues 1 to 22 (MLIPRKVKHRKQHHPRQRGIAS).

This sequence belongs to the universal ribosomal protein uL16 family. In terms of assembly, part of the 50S ribosomal subunit.

Binds 23S rRNA and is also seen to make contacts with the A and possibly P site tRNAs. This Mycobacterium avium (strain 104) protein is Large ribosomal subunit protein uL16.